Consider the following 308-residue polypeptide: Hydroxyacylglutathione hydrolase, mitochondrial (308 aa).

The N-terminal 13 residues, M1–L13, are a transit peptide targeting the mitochondrion. Zn(2+)-binding residues include H102, H104, D106, and H107. K116 carries the N6-acetyllysine modification. Zn(2+) is bound by residues H158 and D182. Substrate contacts are provided by residues K191–Y193 and H221–Y223. H221 serves as a coordination point for Zn(2+). K229 is modified (N6-acetyllysine; alternate). An N6-succinyllysine; alternate modification is found at K229. A substrate-binding site is contributed by R297–K300.

It belongs to the metallo-beta-lactamase superfamily. Glyoxalase II family. Monomer. The cofactor is Zn(2+). As to expression, expressed in liver and kidney.

It is found in the mitochondrion matrix. The protein resides in the cytoplasm. The catalysed reaction is an S-(2-hydroxyacyl)glutathione + H2O = a 2-hydroxy carboxylate + glutathione + H(+). The enzyme catalyses (R)-S-lactoylglutathione + H2O = (R)-lactate + glutathione + H(+). It functions in the pathway secondary metabolite metabolism; methylglyoxal degradation; (R)-lactate from methylglyoxal: step 2/2. In terms of biological role, thiolesterase that catalyzes the hydrolysis of S-D-lactoyl-glutathione to form glutathione and D-lactic acid. In Homo sapiens (Human), this protein is Hydroxyacylglutathione hydrolase, mitochondrial (HAGH).